Here is a 360-residue protein sequence, read N- to C-terminus: MTAQDSTQTEDRKDDHLQIVQERDVETTGTGFDDVHLVHNALPELDYDAIDPSIDFLGHDLSAPIFIESMTGGHHNTTEINRALARAASETGIAMGLGSQRAGLELDDERVLESYTVVRDAAPDAFIYGNLGAAQLREYDIEMVEQAVEMIDADALAVHLNFLQEATQPEGDVDGRNCVAAIERVSEALSVPIIVKETGNGISGETARELTAAGVDALDVAGKGGTTWSGIEAYRAAAANAPRQKQIGTLFREWGIPTAASTIECVAEHDCVIASGGVRTGLDVAKAIALGARAGGLAKPFLKPATDGPDAVIERVGDLIAELRTAMFVTGSGSIDELQQVEYVLHGKTREYVEQRTSSE.

Residue 12-13 (RK) coordinates substrate. FMN-binding positions include 69–71 (SMT), Ser-99, and Asn-130. 99-101 (SQR) serves as a coordination point for substrate. Position 164 (Gln-164) interacts with substrate. Glu-165 contacts Mg(2+). FMN is bound by residues Lys-196, Thr-226, 277–279 (GVR), and 298–299 (AK).

This sequence belongs to the IPP isomerase type 2 family. Homooctamer. Dimer of tetramers. It depends on FMN as a cofactor. Requires NADPH as cofactor. The cofactor is Mg(2+).

The protein localises to the cytoplasm. It carries out the reaction isopentenyl diphosphate = dimethylallyl diphosphate. In terms of biological role, involved in the biosynthesis of isoprenoids. Catalyzes the 1,3-allylic rearrangement of the homoallylic substrate isopentenyl (IPP) to its allylic isomer, dimethylallyl diphosphate (DMAPP). This is Isopentenyl-diphosphate delta-isomerase from Halobacterium salinarum (strain ATCC 700922 / JCM 11081 / NRC-1) (Halobacterium halobium).